Consider the following 758-residue polypeptide: 5-methyltetrahydropteroyltriglutamate--homocysteine methyltransferase (758 aa).

Residues 17–20 (RELK) and K110 each bind 5-methyltetrahydropteroyltri-L-glutamate. L-homocysteine contacts are provided by residues 428 to 430 (IGS) and E481. Residues 428 to 430 (IGS) and E481 contribute to the L-methionine site. 5-methyltetrahydropteroyltri-L-glutamate contacts are provided by residues 512-513 (RC) and W558. An L-homocysteine-binding site is contributed by D596. D596 is an L-methionine binding site. E602 contacts 5-methyltetrahydropteroyltri-L-glutamate. Residues H638, C640, and E662 each contribute to the Zn(2+) site. Catalysis depends on H691, which acts as the Proton donor. C723 contacts Zn(2+).

This sequence belongs to the vitamin-B12 independent methionine synthase family. The cofactor is Zn(2+).

The catalysed reaction is 5-methyltetrahydropteroyltri-L-glutamate + L-homocysteine = tetrahydropteroyltri-L-glutamate + L-methionine. It functions in the pathway amino-acid biosynthesis; L-methionine biosynthesis via de novo pathway; L-methionine from L-homocysteine (MetE route): step 1/1. Its function is as follows. Catalyzes the transfer of a methyl group from 5-methyltetrahydrofolate to homocysteine resulting in methionine formation. This chain is 5-methyltetrahydropteroyltriglutamate--homocysteine methyltransferase, found in Thermosynechococcus vestitus (strain NIES-2133 / IAM M-273 / BP-1).